A 942-amino-acid polypeptide reads, in one-letter code: tRNAse Z TRZ4, mitochondrial (942 aa).

Residues 1-50 (MLTSSMPQNLSLFGFSPLKSSSFALILRPFSLYPPIFASSSPAPSRRPPR) constitute a mitochondrion transit peptide. The disordered stretch occupies residues 38 to 85 (ASSSPAPSRRPPRTAGYRRSGPSPPRRKWSSFEEQKRKGRSPMEKDKA). Residues 67–85 (SSFEEQKRKGRSPMEKDKA) show a composition bias toward basic and acidic residues.

This sequence belongs to the RNase Z family. As to quaternary structure, homodimer. The cofactor is Zn(2+). Ca(2+) is required as a cofactor. Requires Mn(2+) as cofactor. It depends on Mg(2+) as a cofactor.

The protein localises to the mitochondrion. It catalyses the reaction Endonucleolytic cleavage of RNA, removing extra 3' nucleotides from tRNA precursor, generating 3' termini of tRNAs. A 3'-hydroxy group is left at the tRNA terminus and a 5'-phosphoryl group is left at the trailer molecule.. Zinc phosphodiesterase, which displays tRNA 3'-processing endonuclease activity. Involved in tRNA maturation, by removing a 3'-trailer from precursor tRNA. Can process the mitochondrial tRNA-like structures (t-elements). The protein is tRNAse Z TRZ4, mitochondrial of Arabidopsis thaliana (Mouse-ear cress).